Here is a 415-residue protein sequence, read N- to C-terminus: Histidine--tRNA ligase (415 aa).

It belongs to the class-II aminoacyl-tRNA synthetase family. As to quaternary structure, homodimer.

The protein resides in the cytoplasm. It carries out the reaction tRNA(His) + L-histidine + ATP = L-histidyl-tRNA(His) + AMP + diphosphate + H(+). In Clostridium botulinum (strain ATCC 19397 / Type A), this protein is Histidine--tRNA ligase.